The sequence spans 130 residues: MMTQIIHTEKAPAAIGPYVQAVDLGNLVLTSGQIPVNPATGEVPADIVAQARQSLENVKAIIEKAGLTAADIVKTTVFVKDLNDFAAVNAEYERFFKENNHPNFPARSCVEVARLPKDVGLEIEAIAVRK.

Cys109 is a catalytic residue.

This sequence belongs to the RutC family. Homotrimer.

The protein is RutC family protein HI_0719 of Haemophilus influenzae (strain ATCC 51907 / DSM 11121 / KW20 / Rd).